A 204-amino-acid chain; its full sequence is MKNSLLSHQEKKIISFIKQYLNENGYPPTIREICQGVGLSSPSTVHHHLKNLESKGYLQRNPTKPRALELVAEKAPEELLSIPLLGNVAAGYPTLAIENAEEEMQIPKSLFPEKELFALRIKGDSMIEEGILPGDVIIVKKQEVAENGDIVVAYLEGEVTVKKFWKDSVNGVIKLIPANSKYEPIIINRETKILGKVIGLLRRY.

The segment at residues 30-50 (IREICQGVGLSSPSTVHHHLK) is a DNA-binding region (H-T-H motif). Residues serine 125 and lysine 162 each act as for autocatalytic cleavage activity in the active site.

The protein belongs to the peptidase S24 family. Homodimer.

It catalyses the reaction Hydrolysis of Ala-|-Gly bond in repressor LexA.. Its function is as follows. Represses a number of genes involved in the response to DNA damage (SOS response), including recA and lexA. In the presence of single-stranded DNA, RecA interacts with LexA causing an autocatalytic cleavage which disrupts the DNA-binding part of LexA, leading to derepression of the SOS regulon and eventually DNA repair. The protein is LexA repressor of Carboxydothermus hydrogenoformans (strain ATCC BAA-161 / DSM 6008 / Z-2901).